Reading from the N-terminus, the 222-residue chain is Probable nicotinate-nucleotide adenylyltransferase (222 aa).

The protein belongs to the NadD family.

The enzyme catalyses nicotinate beta-D-ribonucleotide + ATP + H(+) = deamido-NAD(+) + diphosphate. The protein operates within cofactor biosynthesis; NAD(+) biosynthesis; deamido-NAD(+) from nicotinate D-ribonucleotide: step 1/1. Its function is as follows. Catalyzes the reversible adenylation of nicotinate mononucleotide (NaMN) to nicotinic acid adenine dinucleotide (NaAD). In Stenotrophomonas maltophilia (strain K279a), this protein is Probable nicotinate-nucleotide adenylyltransferase.